The primary structure comprises 272 residues: Petrobactin import ATP-binding protein FpuC (272 aa).

Residues 2–238 (ISVNKVFYAH…EMFQHIFGIE (237 aa)) form the ABC transporter domain. Residue 34-41 (GPNGSGKS) coordinates ATP.

Belongs to the ABC transporter superfamily. The complex is composed of two ATP-binding proteins (FpuC), two transmembrane proteins (FpuB) and a solute-binding protein (FpuA).

Its subcellular location is the cell membrane. The enzyme catalyses a Fe(III)-siderophore(out) + ATP + H2O = a Fe(III)-siderophore(in) + ADP + phosphate + H(+). Its function is as follows. Part of an ABC transporter complex involved in ferric-petrobactin uptake. Probably responsible for energy coupling to the transport system. The polypeptide is Petrobactin import ATP-binding protein FpuC (Bacillus anthracis).